Consider the following 136-residue polypeptide: ATP synthase epsilon chain, chloroplastic (136 aa).

The protein belongs to the ATPase epsilon chain family. F-type ATPases have 2 components, CF(1) - the catalytic core - and CF(0) - the membrane proton channel. CF(1) has five subunits: alpha(3), beta(3), gamma(1), delta(1), epsilon(1). CF(0) has three main subunits: a, b and c.

It is found in the plastid. The protein resides in the chloroplast thylakoid membrane. Its function is as follows. Produces ATP from ADP in the presence of a proton gradient across the membrane. The polypeptide is ATP synthase epsilon chain, chloroplastic (Chaetosphaeridium globosum (Charophycean green alga)).